The primary structure comprises 1550 residues: Gag-Pol polyprotein (1550 aa).

Gly-2 is lipidated: N-myristoyl glycine; by host. Positions 7–31 (VLRGKKADELEKVRLRPGGKKKYRL) are interaction with Gp41. A Nuclear export signal motif is present at residues 16–22 (LEKVRLR). The Nuclear localization signal motif lies at 26 to 32 (KKKYRLK). Positions 110–136 (AETGTAEKMPNTSRPTAPPSGKRGNYP) are disordered. Tyr-135 carries the phosphotyrosine; by host modification. An interaction with human PPIA/CYPA and NUP153 region spans residues 191 to 228 (NCVGDHQAAMQIIREIINEEAADWDSQHPIPGPLPAGQ). The interval 279–365 (YNPTNILDIK…GGPGQKARLM (87 aa)) is dimerization/Multimerization of capsid protein p24. CCHC-type zinc fingers lie at residues 389–406 (IRYW…QCRA) and 410–427 (QGCW…NCPE). Residues 437–508 (PTGKEASQLP…ERDTSQRGDR (72 aa)) form a disordered region. Residues 456–469 (TNSTSGRSSSGTVG) are compositionally biased toward low complexity. The segment covering 497–508 (RAERDTSQRGDR) has biased composition (basic and acidic residues). The tract at residues 513–517 (PQFSL) is dimerization of protease. The 70-residue stretch at 532-601 (VEVLLDTGAD…TPINIFGRNI (70 aa)) folds into the Peptidase A2 domain. The active-site For protease activity; shared with dimeric partner is the Asp-537. Dimerization of protease stretches follow at residues 561 to 567 (GIGGFIN) and 600 to 612 (NILT…LNLP). One can recognise a Reverse transcriptase domain in the interval 655–845 (EGQLEEAPPT…PPFQWMGCEL (191 aa)). 3 residues coordinate Mg(2+): Asp-721, Asp-796, and Asp-797. Residues 838–846 (FQWMGCELW) are RT 'primer grip'. The Tryptophan repeat motif motif lies at 1008 to 1024 (WEQWWDNYWQVTWIPEW). Residues 1044–1167 (IPGAETFYTD…VDHLVSQGIR (124 aa)) enclose the RNase H type-1 domain. Mg(2+) is bound by residues Asp-1053, Glu-1088, Asp-1108, and Asp-1159. Residues 1173–1214 (EKIEPAQEEHEKYHSIIKELTHKFGIPLLVARQIVNSCAQCQ) form an Integrase-type zinc finger. Zn(2+)-binding residues include His-1182, His-1186, Cys-1210, and Cys-1213. The Integrase catalytic domain maps to 1223-1374 (QVNAEIGVWQ…TPAERLINMI (152 aa)). Asp-1234, Asp-1286, and Glu-1322 together coordinate Mg(2+). The integrase-type DNA-binding region spans 1393-1440 (FQVYYREGRDQLWKGPGELLWKGEGAVIVKVGTDIKVVPRRKAKIIRD).

Homotrimer; further assembles as hexamers of trimers. Interacts with gp41 (via C-terminus). Interacts with host CALM1; this interaction induces a conformational change in the Matrix protein, triggering exposure of the myristate group. Interacts with host AP3D1; this interaction allows the polyprotein trafficking to multivesicular bodies during virus assembly. Part of the pre-integration complex (PIC) which is composed of viral genome, matrix protein, Vpr and integrase. In terms of assembly, homodimer; the homodimer further multimerizes as homohexamers or homopentamers. Interacts with human PPIA/CYPA. Interacts with human NUP153. Interacts with host PDZD8; this interaction stabilizes the capsid. Interacts with monkey TRIM5; this interaction destabilizes the capsid. As to quaternary structure, homodimer, whose active site consists of two apposed aspartic acid residues. Heterodimer of p66 RT and p51 RT (RT p66/p51). Heterodimerization of RT is essential for DNA polymerase activity. The overall folding of the subdomains is similar in p66 RT and p51 RT but the spatial arrangements of the subdomains are dramatically different. In terms of assembly, homotetramer; may further associate as a homohexadecamer. Part of the pre-integration complex (PIC) which is composed of viral genome, matrix protein, Vpr and integrase. Interacts with human SMARCB1/INI1 and human PSIP1/LEDGF isoform 1. Interacts with human KPNA3; this interaction might play a role in nuclear import of the pre-integration complex. Interacts with human NUP153; this interaction might play a role in nuclear import of the pre-integration complex. The cofactor is Mg(2+). Specific enzymatic cleavages by the viral protease yield mature proteins. The protease is released by autocatalytic cleavage. The polyprotein is cleaved during and after budding, this process is termed maturation. Proteolytic cleavage of p66 RT removes the RNase H domain to yield the p51 RT subunit. Nucleocapsid protein p7 might be further cleaved after virus entry.

Its subcellular location is the host cell membrane. The protein localises to the host endosome. The protein resides in the host multivesicular body. It localises to the virion membrane. It is found in the host nucleus. Its subcellular location is the host cytoplasm. The protein localises to the virion. It carries out the reaction Endopeptidase for which the P1 residue is preferably hydrophobic.. The catalysed reaction is Endohydrolysis of RNA in RNA/DNA hybrids. Three different cleavage modes: 1. sequence-specific internal cleavage of RNA. Human immunodeficiency virus type 1 and Moloney murine leukemia virus enzymes prefer to cleave the RNA strand one nucleotide away from the RNA-DNA junction. 2. RNA 5'-end directed cleavage 13-19 nucleotides from the RNA end. 3. DNA 3'-end directed cleavage 15-20 nucleotides away from the primer terminus.. It catalyses the reaction 3'-end directed exonucleolytic cleavage of viral RNA-DNA hybrid.. The enzyme catalyses DNA(n) + a 2'-deoxyribonucleoside 5'-triphosphate = DNA(n+1) + diphosphate. With respect to regulation, protease: The viral protease is inhibited by many synthetic protease inhibitors (PIs), such as amprenavir, atazanavir, indinavir, loprinavir, nelfinavir, ritonavir and saquinavir. Use of protease inhibitors in tritherapy regimens permit more ambitious therapeutic strategies. Reverse transcriptase/ribonuclease H: RT can be inhibited either by nucleoside RT inhibitors (NRTIs) or by non nucleoside RT inhibitors (NNRTIs). NRTIs act as chain terminators, whereas NNRTIs inhibit DNA polymerization by binding a small hydrophobic pocket near the RT active site and inducing an allosteric change in this region. Classical NRTIs are abacavir, adefovir (PMEA), didanosine (ddI), lamivudine (3TC), stavudine (d4T), tenofovir (PMPA), zalcitabine (ddC), and zidovudine (AZT). Classical NNRTIs are atevirdine (BHAP U-87201E), delavirdine, efavirenz (DMP-266), emivirine (I-EBU), and nevirapine (BI-RG-587). The tritherapies used as a basic effective treatment of AIDS associate two NRTIs and one NNRTI. Its function is as follows. Mediates, with Gag polyprotein, the essential events in virion assembly, including binding the plasma membrane, making the protein-protein interactions necessary to create spherical particles, recruiting the viral Env proteins, and packaging the genomic RNA via direct interactions with the RNA packaging sequence (Psi). Gag-Pol polyprotein may regulate its own translation, by the binding genomic RNA in the 5'-UTR. At low concentration, the polyprotein would promote translation, whereas at high concentration, the polyprotein would encapsidate genomic RNA and then shut off translation. Targets the polyprotein to the plasma membrane via a multipartite membrane-binding signal, that includes its myristoylated N-terminus. Matrix protein is part of the pre-integration complex. Implicated in the release from host cell mediated by Vpu. Binds to RNA. In terms of biological role, forms the conical core that encapsulates the genomic RNA-nucleocapsid complex in the virion. Most core are conical, with only 7% tubular. The core is constituted by capsid protein hexamer subunits. The core is disassembled soon after virion entry. Host restriction factors such as TRIM5-alpha or TRIMCyp bind retroviral capsids and cause premature capsid disassembly, leading to blocks in reverse transcription. Capsid restriction by TRIM5 is one of the factors which restricts HIV-1 to the human species. Host PIN1 apparently facilitates the virion uncoating. On the other hand, interactions with PDZD8 or CYPA stabilize the capsid. Functionally, encapsulates and protects viral dimeric unspliced genomic RNA (gRNA). Binds these RNAs through its zinc fingers. Acts as a nucleic acid chaperone which is involved in rearangement of nucleic acid secondary structure during gRNA retrotranscription. Also facilitates template switch leading to recombination. As part of the polyprotein, participates in gRNA dimerization, packaging, tRNA incorporation and virion assembly. Its function is as follows. Aspartyl protease that mediates proteolytic cleavages of Gag and Gag-Pol polyproteins during or shortly after the release of the virion from the plasma membrane. Cleavages take place as an ordered, step-wise cascade to yield mature proteins. This process is called maturation. Displays maximal activity during the budding process just prior to particle release from the cell. Also cleaves Nef and Vif, probably concomitantly with viral structural proteins on maturation of virus particles. Hydrolyzes host EIF4GI and PABP1 in order to shut off the capped cellular mRNA translation. The resulting inhibition of cellular protein synthesis serves to ensure maximal viral gene expression and to evade host immune response. Multifunctional enzyme that converts the viral RNA genome into dsDNA in the cytoplasm, shortly after virus entry into the cell. This enzyme displays a DNA polymerase activity that can copy either DNA or RNA templates, and a ribonuclease H (RNase H) activity that cleaves the RNA strand of RNA-DNA heteroduplexes in a partially processive 3' to 5' endonucleasic mode. Conversion of viral genomic RNA into dsDNA requires many steps. A tRNA(3)-Lys binds to the primer-binding site (PBS) situated at the 5'-end of the viral RNA. RT uses the 3' end of the tRNA primer to perform a short round of RNA-dependent minus-strand DNA synthesis. The reading proceeds through the U5 region and ends after the repeated (R) region which is present at both ends of viral RNA. The portion of the RNA-DNA heteroduplex is digested by the RNase H, resulting in a ssDNA product attached to the tRNA primer. This ssDNA/tRNA hybridizes with the identical R region situated at the 3' end of viral RNA. This template exchange, known as minus-strand DNA strong stop transfer, can be either intra- or intermolecular. RT uses the 3' end of this newly synthesized short ssDNA to perform the RNA-dependent minus-strand DNA synthesis of the whole template. RNase H digests the RNA template except for two polypurine tracts (PPTs) situated at the 5'-end and near the center of the genome. It is not clear if both polymerase and RNase H activities are simultaneous. RNase H probably can proceed both in a polymerase-dependent (RNA cut into small fragments by the same RT performing DNA synthesis) and a polymerase-independent mode (cleavage of remaining RNA fragments by free RTs). Secondly, RT performs DNA-directed plus-strand DNA synthesis using the PPTs that have not been removed by RNase H as primers. PPTs and tRNA primers are then removed by RNase H. The 3' and 5' ssDNA PBS regions hybridize to form a circular dsDNA intermediate. Strand displacement synthesis by RT to the PBS and PPT ends produces a blunt ended, linear dsDNA copy of the viral genome that includes long terminal repeats (LTRs) at both ends. In terms of biological role, catalyzes viral DNA integration into the host chromosome, by performing a series of DNA cutting and joining reactions. This enzyme activity takes place after virion entry into a cell and reverse transcription of the RNA genome in dsDNA. The first step in the integration process is 3' processing. This step requires a complex comprising the viral genome, matrix protein, Vpr and integrase. This complex is called the pre-integration complex (PIC). The integrase protein removes 2 nucleotides from each 3' end of the viral DNA, leaving recessed CA OH's at the 3' ends. In the second step, the PIC enters cell nucleus. This process is mediated through integrase and Vpr proteins, and allows the virus to infect a non dividing cell. This ability to enter the nucleus is specific of lentiviruses, other retroviruses cannot and rely on cell division to access cell chromosomes. In the third step, termed strand transfer, the integrase protein joins the previously processed 3' ends to the 5' ends of strands of target cellular DNA at the site of integration. The 5'-ends are produced by integrase-catalyzed staggered cuts, 5 bp apart. A Y-shaped, gapped, recombination intermediate results, with the 5'-ends of the viral DNA strands and the 3' ends of target DNA strands remaining unjoined, flanking a gap of 5 bp. The last step is viral DNA integration into host chromosome. This involves host DNA repair synthesis in which the 5 bp gaps between the unjoined strands are filled in and then ligated. Since this process occurs at both cuts flanking the HIV genome, a 5 bp duplication of host DNA is produced at the ends of HIV-1 integration. Alternatively, Integrase may catalyze the excision of viral DNA just after strand transfer, this is termed disintegration. This chain is Gag-Pol polyprotein (gag-pol), found in Homo sapiens (Human).